The sequence spans 182 residues: Acireductone dioxygenase (182 aa).

Fe(2+) contacts are provided by His-100, His-102, Glu-106, and His-145. Positions 100, 102, 106, and 145 each coordinate Ni(2+).

Belongs to the acireductone dioxygenase (ARD) family. As to quaternary structure, monomer. The cofactor is Fe(2+). Ni(2+) is required as a cofactor.

The enzyme catalyses 1,2-dihydroxy-5-(methylsulfanyl)pent-1-en-3-one + O2 = 3-(methylsulfanyl)propanoate + CO + formate + 2 H(+). It carries out the reaction 1,2-dihydroxy-5-(methylsulfanyl)pent-1-en-3-one + O2 = 4-methylsulfanyl-2-oxobutanoate + formate + 2 H(+). The protein operates within amino-acid biosynthesis; L-methionine biosynthesis via salvage pathway; L-methionine from S-methyl-5-thio-alpha-D-ribose 1-phosphate: step 5/6. Its function is as follows. Catalyzes 2 different reactions between oxygen and the acireductone 1,2-dihydroxy-3-keto-5-methylthiopentene (DHK-MTPene) depending upon the metal bound in the active site. Fe-containing acireductone dioxygenase (Fe-ARD) produces formate and 2-keto-4-methylthiobutyrate (KMTB), the alpha-ketoacid precursor of methionine in the methionine recycle pathway. Ni-containing acireductone dioxygenase (Ni-ARD) produces methylthiopropionate, carbon monoxide and formate, and does not lie on the methionine recycle pathway. This chain is Acireductone dioxygenase, found in Nostoc sp. (strain PCC 7120 / SAG 25.82 / UTEX 2576).